The following is a 1611-amino-acid chain: MSSFPTRVVALYPYRSSFSDDLEFDPGQVIDVVSNLDGDWYTGTYVDSDGNRKIGSFPKDFTEPAEDAVFVERASEMALHQPTPTSAVHSRNSSLGYAPSITRSIKSISNNTEHLGADTESYLSANDFIDSTSEALTKIVDVDTLSAPFGNDSNSRPHSLKNVEKLHTFSAPYTISEETPSCSTENDSLPLTATHTITGGEDAATGAAVTNTTTTHITTSTNTSTVIPSNPNSVFLVDCTHSQCPTDLPNIATTQHSLRYLDNASASAITVLERTHPAASSTMATESSHQSPSADSQAEELSKSQRVAKDDDPFVVSNTANSDEPASSSKPAKPLTDLNRAFSQRLNLDPQKPGKSQGEISEQEEDEYDDAESDEMHSPYSTHEPESEPEDQDEPSEKDDENKDVEEEQEQEQEEEQIDPEEAKRIALRERMAKMSGGIGMHVFGLPGLAAPIGRKNTLRRTPAKSSEEAKSTTNDSSPPKDSSSTSTQPTEQSNAQQAPSPKEEERPLPSEPSQNQPAEYRDTPDTPRNIMPLPGLMSADQPIKVTEPSNDADKAIVAEGPNNEEETKGPVIPETQETSEQQVHKTPSPEKQKVLSPPPIITNFDKETLASNEAHEAVPQKPSAPQVTRLMAPQDSSSVVTPSPTSLLDPARAVRKVIDGIDPPKEAGAGATADVESAANSPITPPRTWHSPDFTSKSFEPIERKLPSRISEVTEDSIDEDKQNEVDPSTSARALPPPGLRFGKVDTLASLAHDDLDDLPAVPRIFSPPPLPKTPSGEFGDNEFMFPKKSNRVRGHQSRPSTGSQLRNVVPVSIVTSGGRPALPDEMASPSSSIGHPLPSPPPADFNSLNVDFYEPHSYLESPAPEPQPSYEEESFNATVIHAPTPSTATFQGHPTISNVATPPLKQDVTESKASPVADASATHQSSTGLTQEITQLGSNMRLPTKLTRPSNDGRKASGPRPAAPPSIPPPLPVSNILSSPTSEPPKDHPPSAPLSKPVSTSPAAPLARVPPVPKLSSKAPPVPLPSADAPPIPVPSTAPPVPIPTSTPPVPKSSSGAPSAPPPVPAPSSEIPSIPAPSGAPPVPAPSGIPPVPKPSVAAPPVPKPSVAVPPVPAPSGAPPVPKPSVAAPPVPVPSGAPPVPKPSVAAPPVPAPSGAPPVPKPSVAAPPVPAPSSGIPPVPKPAAGVPPVPPPSEAPPVPKPSVGVPPVPPPSTAPPVPTPSAGLPPVPVPTAKAPPVPAPSSEAPSVSTPRSSVPSPHSNASPSPTSSSMASAAPARTSVSRSKSKAERHETSTSSRKSSKSGEHHHHHNEGHADSSSTRTSLAHQDSRKSLHRHLSRSSSRASKKPSIVSTTGPFNESFSAKPVEPCASEKWWLNSTAVPKSVVQMNDSVLYMIKEGITGQDKKYKSVHILFPDYSQTVLTATFNPHNQNITQLSQLQLAPPAQPSKARLDEEYACYGSTILKKARAYQGSMVGDGSAFTFVNSVMSILAHNLEPINKQTFGGVIYKNVGNVTVQQIGEIRPGDIVTFDKAKFSGQKGTLRSKYSLEVGKPMHYGIISEWDVSKLKIRVLEQGRESKKVSVASYKFGDLKSGEVTVWRVMRRSWLGWN.

The 65-residue stretch at Ser3–Asp67 folds into the SH3 domain. 4 disordered regions span residues Thr275–Leu648, Ile662–Leu741, Ala762–Asn851, and Thr886–Lys1365. A compositionally biased stretch (polar residues) spans Ala278–Ser296. The segment covering Glu300–Asp312 has biased composition (basic and acidic residues). Residues Val316–Lys330 are compositionally biased toward polar residues. Composition is skewed to acidic residues over residues Ser361–Ser373 and Ser387–Pro420. Residues Glu421–Ala433 are compositionally biased toward basic and acidic residues. A compositionally biased stretch (low complexity) spans Ser472 to Ser494. The segment covering Thr576–Lys586 has biased composition (polar residues). Basic and acidic residues predominate over residues Phe605–Val619. Over residues Ser637 to Leu648 the composition is skewed to low complexity. Composition is skewed to polar residues over residues Ser799–Arg808, Thr886–Ala902, and Ala923–Ser940. 3 stretches are compositionally biased toward pro residues: residues Pro963–Pro974, Pro1022–Pro1053, and Ile1076–Ala1241. Residues Pro1242–Ala1278 are compositionally biased toward low complexity. A phosphoserine mark is found at Ser1258, Ser1261, and Ser1266. The span at Lys1300–Asn1312 shows a compositional bias: basic residues. The span at Asp1317–His1327 shows a compositional bias: polar residues. Over residues Arg1340–Ser1350 the composition is skewed to low complexity. A compositionally biased stretch (polar residues) spans Ile1351–Phe1362. Ser1379 carries the phosphoserine modification. Residue Thr1380 is modified to Phosphothreonine.

Its subcellular location is the cytoplasm. The polypeptide is SH3 domain-containing protein C23A1.17 (Schizosaccharomyces pombe (strain 972 / ATCC 24843) (Fission yeast)).